A 112-amino-acid chain; its full sequence is ATP synthase subunit c (112 aa).

2 helical membrane passes run 36–56 and 81–101; these read FSVL…AIGM and MFIA…IALI.

It belongs to the ATPase C chain family. As to quaternary structure, F-type ATPases have 2 components, F(1) - the catalytic core - and F(0) - the membrane proton channel. F(1) has five subunits: alpha(3), beta(3), gamma(1), delta(1), epsilon(1). F(0) has three main subunits: a(1), b(2) and c(10-14). The alpha and beta chains form an alternating ring which encloses part of the gamma chain. F(1) is attached to F(0) by a central stalk formed by the gamma and epsilon chains, while a peripheral stalk is formed by the delta and b chains.

It is found in the cell inner membrane. F(1)F(0) ATP synthase produces ATP from ADP in the presence of a proton or sodium gradient. F-type ATPases consist of two structural domains, F(1) containing the extramembraneous catalytic core and F(0) containing the membrane proton channel, linked together by a central stalk and a peripheral stalk. During catalysis, ATP synthesis in the catalytic domain of F(1) is coupled via a rotary mechanism of the central stalk subunits to proton translocation. The chain is ATP synthase subunit c from Campylobacter jejuni subsp. jejuni serotype O:2 (strain ATCC 700819 / NCTC 11168).